The chain runs to 522 residues: Apolipoprotein N-acyltransferase (522 aa).

The next 6 membrane-spanning stretches (helical) occupy residues 17–37, 61–81, 98–118, 127–147, 164–184, and 197–217; these read YFTY…FSPF, TALL…VSWL, FLVG…TYLV, VIFA…FTGF, IAPI…SAVI, and LKLV…SAYS. The CN hydrolase domain occupies 236 to 483; that stretch reads AQGNIEQNLK…ETTLTYKIAP (248 aa). Glu-276 serves as the catalytic Proton acceptor. Residue Lys-342 is part of the active site. Cys-394 serves as the catalytic Nucleophile. Residues 495–515 traverse the membrane as a helical segment; that stretch reads NMPLYALSLLFLLLHSMMAFI.

Belongs to the CN hydrolase family. Apolipoprotein N-acyltransferase subfamily.

The protein localises to the cell inner membrane. It catalyses the reaction N-terminal S-1,2-diacyl-sn-glyceryl-L-cysteinyl-[lipoprotein] + a glycerophospholipid = N-acyl-S-1,2-diacyl-sn-glyceryl-L-cysteinyl-[lipoprotein] + a 2-acyl-sn-glycero-3-phospholipid + H(+). It participates in protein modification; lipoprotein biosynthesis (N-acyl transfer). Catalyzes the phospholipid dependent N-acylation of the N-terminal cysteine of apolipoprotein, the last step in lipoprotein maturation. The chain is Apolipoprotein N-acyltransferase from Haemophilus influenzae (strain ATCC 51907 / DSM 11121 / KW20 / Rd).